A 723-amino-acid polypeptide reads, in one-letter code: BTB/POZ domain-containing protein 18 (723 aa).

Residues 34–102 (CDALLQAEGE…LYTSEMEVSQ (69 aa)) form the BTB domain. Disordered regions lie at residues 150–176 (APISARVVGPKSRPQTPLPVTQTPSPL), 188–350 (EGAH…EEGQ), and 370–394 (EPPLRNTQDSPQILEPSDVEEPSGT). Composition is skewed to polar residues over residues 162 to 174 (RPQTPLPVTQTPS) and 195 to 205 (NLPNADSLSDT). Low complexity-rich tracts occupy residues 217–227 (QESRSSPSSQR) and 271–286 (TSTPSSILSGPSSMPT). Composition is skewed to basic and acidic residues over residues 303–312 (QGVDKQKPGE) and 327–336 (KPAENKKQSP). Ser-414 carries the post-translational modification Phosphoserine. The tract at residues 603 to 637 (TPDLEITSSQPLDGQGEKLLHFDSSDPSQRSYNHL) is disordered. Residues 617-626 (QGEKLLHFDS) are compositionally biased toward basic and acidic residues. The segment covering 627–636 (SDPSQRSYNH) has biased composition (polar residues). A phosphoserine mark is found at Ser-682 and Ser-683. The tract at residues 699-723 (LGPTSVPSVWPDPSSESETEVDILT) is disordered. A compositionally biased stretch (acidic residues) spans 713–723 (SESETEVDILT).

In terms of tissue distribution, expressed in testis.

It is found in the nucleus. Specifically required during spermatogenesis to promote expression of piRNA precursors. The piRNA metabolic process mediates the repression of transposable elements during meiosis by forming complexes composed of piRNAs and Piwi proteins and governs the methylation and subsequent repression of transposons, which is essential for the germline integrity. Acts by facilitating transcription elongation at piRNA loci during pachytene. This Mus musculus (Mouse) protein is BTB/POZ domain-containing protein 18.